The primary structure comprises 153 residues: Endoribonuclease YbeY (153 aa).

Residues His114, His118, and His124 each contribute to the Zn(2+) site.

The protein belongs to the endoribonuclease YbeY family. Zn(2+) is required as a cofactor.

It localises to the cytoplasm. Its function is as follows. Single strand-specific metallo-endoribonuclease involved in late-stage 70S ribosome quality control and in maturation of the 3' terminus of the 16S rRNA. This is Endoribonuclease YbeY from Shewanella denitrificans (strain OS217 / ATCC BAA-1090 / DSM 15013).